A 344-amino-acid chain; its full sequence is Acireductone dioxygenase (344 aa).

4 residues coordinate Fe(2+): H92, H94, E98, and H137. The Ni(2+) site is built by H92, H94, E98, and H137.

Belongs to the acireductone dioxygenase (ARD) family. Requires Fe(2+) as cofactor. The cofactor is Ni(2+).

The protein resides in the cytoplasm. Its subcellular location is the nucleus. It catalyses the reaction 1,2-dihydroxy-5-(methylsulfanyl)pent-1-en-3-one + O2 = 4-methylsulfanyl-2-oxobutanoate + formate + 2 H(+). The catalysed reaction is 1,2-dihydroxy-5-(methylsulfanyl)pent-1-en-3-one + O2 = 3-(methylsulfanyl)propanoate + CO + formate + 2 H(+). The protein operates within amino-acid biosynthesis; L-methionine biosynthesis via salvage pathway; L-methionine from S-methyl-5-thio-alpha-D-ribose 1-phosphate: step 5/6. Functionally, catalyzes 2 different reactions between oxygen and the acireductone 1,2-dihydroxy-3-keto-5-methylthiopentene (DHK-MTPene) depending upon the metal bound in the active site. Fe-containing acireductone dioxygenase (Fe-ARD) produces formate and 2-keto-4-methylthiobutyrate (KMTB), the alpha-ketoacid precursor of methionine in the methionine recycle pathway. Ni-containing acireductone dioxygenase (Ni-ARD) produces methylthiopropionate, carbon monoxide and formate, and does not lie on the methionine recycle pathway. The chain is Acireductone dioxygenase from Leishmania braziliensis.